The sequence spans 783 residues: Type 4 coupling protein DotL (783 aa).

Residues 47-67 (VSYYFSEAATFLLIMGGIFFL) form a helical membrane-spanning segment. The interval 100 to 500 (NIARGITFFG…ICMKLEDPTE (401 aa)) is ATPase domain. The segment at 671-773 (VEGALTIFSK…SAKISAEREK (103 aa)) is interaction with IcmS/IcmW.

As to quaternary structure, the T4BSS is a complex nanomachine composed of several subcomplexes. This subunit is part of the Type IV Coupling Complex (T4CC), a subcomplex composed of the DotLMNYZ core and the IcmSW-LvgA adapter subunits, linked by the C-terminal tail of DotL. Six DotLMNYZ hetero-pentameric units may assemble into a hexameric nanomachine, forming an inner membrane channel for effectors to pass through. Interacts directly with DotM. Interacts directly, via its C-terminal region, with the type IV adapter proteins IcmS and IcmW. Also interacts with DotN and LvgA via its C-terminal region.

Its subcellular location is the cell inner membrane. Component of the Dot/Icm type IVB secretion system (T4BSS), which is used to inject bacterial effector proteins into eukaryotic host cells. Part of a subcomplex which recruits effector proteins and delivers them to the core transmembrane subcomplex. Plays a central role in the assembly of the subcomplex. Required for the recruitment of IcmS and IcmW to the inner membrane and for the translocation of adapter-dependent substrates. May have ATPase activity. The protein is Type 4 coupling protein DotL of Legionella pneumophila subsp. pneumophila (strain Philadelphia 1 / ATCC 33152 / DSM 7513).